The following is a 444-amino-acid chain: Ribosomal protein uS12 methylthiotransferase RimO (444 aa).

One can recognise an MTTase N-terminal domain in the interval 6–116; that stretch reads PNIGFVSLGC…VMEHVHKYVP (111 aa). Residues Cys-15, Cys-51, Cys-80, Cys-148, Cys-152, and Cys-155 each contribute to the [4Fe-4S] cluster site. The 242-residue stretch at 134 to 375 folds into the Radical SAM core domain; the sequence is LTPKHYAYLK…MQLQQEISAA (242 aa). A TRAM domain is found at 378 to 444; it reads QQKIGKTWKV…ADEYDLWGTC (67 aa).

The protein belongs to the methylthiotransferase family. RimO subfamily. It depends on [4Fe-4S] cluster as a cofactor.

Its subcellular location is the cytoplasm. The enzyme catalyses L-aspartate(89)-[ribosomal protein uS12]-hydrogen + (sulfur carrier)-SH + AH2 + 2 S-adenosyl-L-methionine = 3-methylsulfanyl-L-aspartate(89)-[ribosomal protein uS12]-hydrogen + (sulfur carrier)-H + 5'-deoxyadenosine + L-methionine + A + S-adenosyl-L-homocysteine + 2 H(+). In terms of biological role, catalyzes the methylthiolation of an aspartic acid residue of ribosomal protein uS12. The sequence is that of Ribosomal protein uS12 methylthiotransferase RimO from Actinobacillus succinogenes (strain ATCC 55618 / DSM 22257 / CCUG 43843 / 130Z).